We begin with the raw amino-acid sequence, 62 residues long: MSSGTPSLGKRNKTPTHIRCRRCGRKAFNVKKGYCAACGFGRSRRLRKYRWSKKWKKKKNVH.

The Zn(2+) site is built by cysteine 20, cysteine 23, cysteine 35, and cysteine 38. A C4-type zinc finger spans residues 20–38 (CRRCGRKAFNVKKGYCAAC).

The protein belongs to the eukaryotic ribosomal protein eL37 family. The cofactor is Zn(2+).

Its function is as follows. Binds to the 23S rRNA. This Pyrococcus abyssi (strain GE5 / Orsay) protein is Large ribosomal subunit protein eL37 (rpl37e).